The primary structure comprises 893 residues: Alanine--tRNA ligase (893 aa).

Belongs to the class-II aminoacyl-tRNA synthetase family.

Its subcellular location is the cytoplasm. It carries out the reaction tRNA(Ala) + L-alanine + ATP = L-alanyl-tRNA(Ala) + AMP + diphosphate. Its function is as follows. Catalyzes the attachment of alanine to tRNA(Ala) in a two-step reaction: alanine is first activated by ATP to form Ala-AMP and then transferred to the acceptor end of tRNA(Ala). Also edits incorrectly charged Ser-tRNA(Ala) and Gly-tRNA(Ala) via its editing domain. This is Alanine--tRNA ligase (alaS) from Leuconostoc mesenteroides subsp. mesenteroides (strain ATCC 8293 / DSM 20343 / BCRC 11652 / CCM 1803 / JCM 6124 / NCDO 523 / NBRC 100496 / NCIMB 8023 / NCTC 12954 / NRRL B-1118 / 37Y).